Reading from the N-terminus, the 100-residue chain is Large ribosomal subunit protein uL23 (100 aa).

Belongs to the universal ribosomal protein uL23 family. As to quaternary structure, part of the 50S ribosomal subunit. Contacts protein L29, and trigger factor when it is bound to the ribosome.

One of the early assembly proteins it binds 23S rRNA. One of the proteins that surrounds the polypeptide exit tunnel on the outside of the ribosome. Forms the main docking site for trigger factor binding to the ribosome. The protein is Large ribosomal subunit protein uL23 of Synechococcus sp. (strain CC9605).